Reading from the N-terminus, the 141-residue chain is Hemoglobin subunit alpha-A (141 aa).

The Globin domain occupies 1-141 (VLSAADKANV…VGAVLTAKYR (141 aa)). His58 serves as a coordination point for O2. His87 contributes to the heme b binding site.

This sequence belongs to the globin family. Heterotetramer of two alpha chains and two beta chains. As to expression, red blood cells.

Functionally, involved in oxygen transport from the lung to the various peripheral tissues. This is Hemoglobin subunit alpha-A (HBAA) from Chloephaga melanoptera (Andean goose).